Here is a 124-residue protein sequence, read N- to C-terminus: UPF0102 protein Msil_0293 (124 aa).

Belongs to the UPF0102 family.

This chain is UPF0102 protein Msil_0293, found in Methylocella silvestris (strain DSM 15510 / CIP 108128 / LMG 27833 / NCIMB 13906 / BL2).